The chain runs to 430 residues: Serine hydroxymethyltransferase (430 aa).

120 to 122 (GHI) provides a ligand contact to (6S)-5,6,7,8-tetrahydrofolate. Lys226 bears the N6-(pyridoxal phosphate)lysine mark.

It belongs to the SHMT family. As to quaternary structure, homodimer. Pyridoxal 5'-phosphate is required as a cofactor.

The protein resides in the cytoplasm. Its pathway is amino-acid biosynthesis; glycine biosynthesis; glycine from L-serine: step 1/1. Its function is as follows. Catalyzes the reversible interconversion of serine and glycine with a modified folate serving as the one-carbon carrier. Also exhibits a pteridine-independent aldolase activity toward beta-hydroxyamino acids, producing glycine and aldehydes, via a retro-aldol mechanism. In Pyrobaculum aerophilum (strain ATCC 51768 / DSM 7523 / JCM 9630 / CIP 104966 / NBRC 100827 / IM2), this protein is Serine hydroxymethyltransferase.